The chain runs to 372 residues: Tribbles homolog 1 (372 aa).

2 disordered regions span residues 1 to 26 (MRVG…FPAA) and 49 to 85 (RLSE…CVSS). Pro residues predominate over residues 59–74 (YLSPPGSPCSPQPPPS). One can recognise a Protein kinase domain in the interval 91–338 (IADYLLLPLA…APQILLHPWF (248 aa)). The COP1-binding motif lies at 355–360 (DQIVPE).

Belongs to the protein kinase superfamily. CAMK Ser/Thr protein kinase family. Tribbles subfamily. Monomer. Interacts (via protein kinase domain) with CEBPA. Interacts with COP1.

Its function is as follows. Adapter protein involved in protein degradation by interacting with COP1 ubiquitin ligase. Promotes CEBPA degradation and inhibits its function. Controls macrophage, eosinophil and neutrophil differentiation via the COP1-binding domain. Regulates myeloid cell differentiation by altering the expression of CEBPA in a COP1-dependent manner. Interacts with MAPK kinases and regulates activation of MAP kinases, but has no kinase activity. This is Tribbles homolog 1 from Mus musculus (Mouse).